Consider the following 46-residue polypeptide: SNKKDYRKEIVDKHNALRRSVKPTARNMLSMEVNSKAAQNAQRRXD.

This sequence belongs to the CRISP family. Post-translationally, contains 8 disulfide bonds. In terms of tissue distribution, expressed by the venom gland.

It is found in the secreted. Its function is as follows. Blocks contraction of smooth muscle elicited by high potassium-induced depolarization, but does not block caffeine-stimulated contraction. May target voltage-gated calcium channels on smooth muscle. The chain is Cysteine-rich venom protein asurin-1 from Austrelaps superbus (Lowland copperhead snake).